A 409-amino-acid polypeptide reads, in one-letter code: Palmitoyltransferase ZDHHC23 (409 aa).

Topologically, residues 1–87 are cytoplasmic; the sequence is MTQKGSMKPV…RIPWLRGAKK (87 aa). The helical transmembrane segment at 88–106 threads the bilayer; sequence VNISIIPPLVLLPVFLHVA. Topologically, residues 107–109 are lumenal; the sequence is SWH. Residues 110–132 traverse the membrane as a helical segment; it reads FLLGVVVLTSLPVLALWYYYLTH. Topologically, residues 133 to 136 are cytoplasmic; it reads RRKE. Residues 137–157 traverse the membrane as a helical segment; it reads QTLFFLSLGLFSLGYMYYVFL. Over 158–165 the chain is Lumenal; it reads QEVVPKGR. The chain crosses the membrane as a helical span at residues 166 to 186; sequence VGPVQLAVLTCGLFLILLALH. Residues 187–302 lie on the Cytoplasmic side of the membrane; that stretch reads RAKKNPGYLS…NSCVGESNHQ (116 aa). A disordered region spans residues 215-255; sequence RKGQEKTKGFPGADMSGSLNNRTTKDDPKGSSKMPAGSPTK. The DHHC domain occupies 259-309; the sequence is DWCAKCQLVRPARAWHCRICGICVRRMDHHCVWINSCVGESNHQAFILALL. Cys289 acts as the S-palmitoyl cysteine intermediate in catalysis. A helical transmembrane segment spans residues 303 to 323; it reads AFILALLIFLLTSVYGITLTL. Over 324 to 331 the chain is Lumenal; that stretch reads DTICRDRS. The helical transmembrane segment at 332–352 threads the bilayer; sequence VFTALFYCPGVYANYSSALSF. Position 353 (Thr353) is a topological domain, cytoplasmic. The helical transmembrane segment at 354–374 threads the bilayer; sequence CVWYSVIITAGMAYIFLIQLI. The Lumenal segment spans residues 375 to 409; the sequence is NISYNVTEREVQQALRQKTGRRLLCGLIVDTGLLG.

This sequence belongs to the DHHC palmitoyltransferase family. As to quaternary structure, interacts with NOS1.

It localises to the golgi apparatus membrane. Its subcellular location is the golgi apparatus. It is found in the trans-Golgi network membrane. It catalyses the reaction L-cysteinyl-[protein] + hexadecanoyl-CoA = S-hexadecanoyl-L-cysteinyl-[protein] + CoA. Its function is as follows. Palmitoyltransferase that could catalyze the addition of palmitate onto various protein substrates and be involved in a variety of cellular processes. Palmitoyltransferase that mediates palmitoylation of KCNMA1, regulating localization of KCNMA1 to the plasma membrane. May be involved in NOS1 regulation and targeting to the synaptic membrane. The protein is Palmitoyltransferase ZDHHC23 of Homo sapiens (Human).